We begin with the raw amino-acid sequence, 345 residues long: Pectin lyase (345 aa).

Positions 1-24 (MKRFCLWFAVFSLLLVLLPGKAFG) are cleaved as a signal peptide. Arg234 is an active-site residue.

The protein belongs to the polysaccharide lyase 1 family.

The protein resides in the secreted. It catalyses the reaction Eliminative cleavage of (1-&gt;4)-alpha-D-galacturonan methyl ester to give oligosaccharides with 4-deoxy-6-O-methyl-alpha-D-galact-4-enuronosyl groups at their non-reducing ends.. Its activity is regulated as follows. Inhibited by Hg(2+) and Mn(2+). Not affected by EDTA in vitro. Catalyzes the depolymerization of pectins of methyl esterification degree from 13 to 75%, with an endo mode of action. Cannot degrade polygalacturonate. Also displays protopectinase activity, i.e. releases pectin from protopectin. This chain is Pectin lyase (pelB), found in Bacillus subtilis.